A 119-amino-acid chain; its full sequence is Ribosome-binding factor A (119 aa).

The protein belongs to the RbfA family. Monomer. Binds 30S ribosomal subunits, but not 50S ribosomal subunits or 70S ribosomes.

The protein localises to the cytoplasm. Its function is as follows. One of several proteins that assist in the late maturation steps of the functional core of the 30S ribosomal subunit. Associates with free 30S ribosomal subunits (but not with 30S subunits that are part of 70S ribosomes or polysomes). Required for efficient processing of 16S rRNA. May interact with the 5'-terminal helix region of 16S rRNA. The sequence is that of Ribosome-binding factor A from Coxiella burnetii (strain CbuG_Q212) (Coxiella burnetii (strain Q212)).